The primary structure comprises 1960 residues: Zinc finger protein 638 (1960 aa).

Residues 1–137 are disordered; the sequence is MSRPRFNPRG…SPKVQSRYTK (137 aa). Pro residues predominate over residues 19–31; sequence APNPPGMRPPGPF. An asymmetric dimethylarginine mark is found at R47, R49, and R54. Polar residues predominate over residues 60 to 75; sequence SYQNMGPQRMNVQVTQ. The segment covering 76–89 has biased composition (basic and acidic residues); the sequence is HRTDPRLTKEKLDF. A compositionally biased stretch (polar residues) spans 117–137; it reads KQSSVTQVTEQSPKVQSRYTK. S128 and S288 each carry phosphoserine. K291 is covalently cross-linked (Glycyl lysine isopeptide (Lys-Gly) (interchain with G-Cter in SUMO2)). Residues S298, S367, S381, and S418 each carry the phosphoserine modification. Residues 352–373 are disordered; it reads KSVISSADAHGGPTESKKDYQS. 3 disordered regions span residues 463–673, 749–804, and 827–899; these read NPEI…QSLS, PGKK…STVK, and KASI…KESE. A compositionally biased stretch (basic and acidic residues) spans 468–483; sequence PSRRNESNRKENETPR. Positions 470 to 573 are involved in localization to nuclear speckles; the sequence is RRNESNRKEN…ERTSRKSVRS (104 aa). The span at 484–556 shows a compositional bias: basic residues; it reads RRSHSPSPRH…SRNLLRRSPK (73 aa). S554 bears the Phosphoserine mark. Basic and acidic residues-rich tracts occupy residues 565-583 and 591-602; these read RTSR…EDGG and EVTKQKHTETVD. A phosphoserine mark is found at S606 and S615. The segment covering 618–628 has biased composition (low complexity); it reads KPSAKSLSSVK. S637 carries the phosphoserine modification. An RRM 1 domain is found at 676-751; sequence SILLVSELPE…KSVKVCVPGK (76 aa). Over residues 755 to 782 the composition is skewed to basic and acidic residues; sequence QNKEMKKKPSDIKKSSASALKKETDASK. A Glycyl lysine isopeptide (Lys-Gly) (interchain with G-Cter in SUMO2) cross-link involves residue K775. The span at 783-802 shows a compositional bias: low complexity; it reads TMETVSSSSSAKSGQIKSST. 3 stretches are compositionally biased toward basic and acidic residues: residues 838 to 854, 867 to 879, and 888 to 899; these read KSLE…KDSN, ASSE…KSAE, and ATEKEPVNKESE. The 75-residue stretch at 902-976 folds into the RRM 2 domain; the sequence is SVVFISNLPN…NQLSISMAPE (75 aa). Basic and acidic residues predominate over residues 1082–1092; the sequence is SEVQRKNDLEL. Disordered stretches follow at residues 1082–1151, 1396–1420, 1442–1462, 1484–1527, and 1550–1583; these read SEVQ…EEPK, TVVS…PKPV, TRSG…GVNR, TKQS…KSKE, and PSQA…KGKT. At S1099 the chain carries Phosphoserine. Positions 1140 to 1151 are enriched in basic and acidic residues; sequence VHQEELGKEEPK. Residues 1399-1409 are compositionally biased toward low complexity; sequence SSPKAKSTPSK. S1400 bears the Phosphoserine mark. Positions 1442-1459 are enriched in polar residues; the sequence is TRSGLAESNSKSKPTQIG. 2 stretches are compositionally biased toward basic and acidic residues: residues 1484-1503 and 1518-1527; these read TKQS…DDSN and TTDRSSKSKE. Phosphoserine is present on residues S1635 and S1661. Disordered regions lie at residues 1763 to 1898 and 1930 to 1960; these read EVGD…SDVP and KSTR…RSSR. Positions 1772-1790 are enriched in basic and acidic residues; sequence NDSKVELARGKIEHHTDKK. A Glycyl lysine isopeptide (Lys-Gly) (interchain with G-Cter in SUMO2) cross-link involves residue K1804. Polar residues predominate over residues 1806-1818; it reads DSFSQVGPGSETV. Over residues 1819 to 1831 the composition is skewed to basic and acidic residues; it reads TQKDLKTMPERHL. S1864 carries the phosphoserine modification. Basic and acidic residues predominate over residues 1870–1885; the sequence is AELKDSEPDEKRRKTQ. A Matrin-type zinc finger spans residues 1876-1906; the sequence is EPDEKRRKTQDSSVGKSMTSDVPGDLDFLVP. Over residues 1886-1895 the composition is skewed to polar residues; it reads DSSVGKSMTS. Residues 1936–1960 show a composition bias toward basic and acidic residues; the sequence is QNTEKFMAKQRKEKEQNETEERSSR.

Interacts with FHL2. Interacts with CEBPA, CEBPD and CEBPG. Interacts with MPHOSPH8 and TASOR components of the HUSH complex; leading to recruitment of the HUSH complex. Interacts with SETDB1. Interacts with HDAC1. Interacts with HDAC4.

It is found in the nucleus speckle. Transcription factor that binds to cytidine clusters in double-stranded DNA. Plays a key role in the silencing of unintegrated retroviral DNA: some part of the retroviral DNA formed immediately after infection remains unintegrated in the host genome and is transcriptionally repressed. Mediates transcriptional repression of unintegrated viral DNA by specifically binding to the cytidine clusters of retroviral DNA and mediating the recruitment of chromatin silencers, such as the HUSH complex, SETDB1 and the histone deacetylases HDAC1 and HDAC4. Acts as an early regulator of adipogenesis by acting as a transcription cofactor of CEBPs (CEBPA, CEBPD and/or CEBPG), controlling the expression of PPARG and probably of other proadipogenic genes, such as SREBF1. May also regulate alternative splicing of target genes during adipogenesis. The polypeptide is Zinc finger protein 638 (Mus musculus (Mouse)).